The following is a 503-amino-acid chain: Capsanthin/capsorubin synthase, chromoplastic (503 aa).

88 to 117 (VIIIGTGPAGLRLAEQVSSRHSVKVCCVDP) serves as a coordination point for NAD(+).

The protein belongs to the lycopene cyclase family.

The protein resides in the plastid. Its subcellular location is the chromoplast. It catalyses the reaction all-trans-violaxanthin = all-trans-capsorubin. It carries out the reaction all-trans-antheraxanthin = all-trans-capsanthin. It functions in the pathway carotenoid biosynthesis; capsanthin biosynthesis; capsanthin from antheraxanthin: step 1/1. The protein operates within carotenoid biosynthesis; capsorubin biosynthesis; capsorubin from violaxanthin: step 1/1. In terms of biological role, catalyzes the conversion of the ubiquitous 5,6-epoxycarotenoids, antheraxanthin and violaxanthin, into capsanthin and capsorubin, respectively. This Citrus sinensis (Sweet orange) protein is Capsanthin/capsorubin synthase, chromoplastic (CCS).